A 58-amino-acid polypeptide reads, in one-letter code: Preprotein translocase subunit SecG (58 aa).

The Cytoplasmic portion of the chain corresponds to 1-33 (MARRRKYEGLNPFVAAGLIKFSEEGELEKIKLS). Residues 34–55 (PKAAIAISLAIIAAILALNLLL) traverse the membrane as a helical segment. The Extracellular portion of the chain corresponds to 56–58 (PPP).

Belongs to the SEC61-beta family. In terms of assembly, component of the protein translocase complex. Heterotrimer consisting of alpha (SecY), beta (SecG) and gamma (SecE) subunits. Can form oligomers of the heterotrimer.

It localises to the cell membrane. Involved in protein export. The function of the beta subunit is unknown, but it may be involved in stabilization of the trimeric complex. The chain is Preprotein translocase subunit SecG from Pyrobaculum calidifontis (strain DSM 21063 / JCM 11548 / VA1).